A 216-amino-acid polypeptide reads, in one-letter code: Phosphatidylserine decarboxylase proenzyme (216 aa).

Serine 185 (schiff-base intermediate with substrate; via pyruvic acid) is an active-site residue. Serine 185 carries the pyruvic acid (Ser); by autocatalysis modification.

Belongs to the phosphatidylserine decarboxylase family. PSD-A subfamily. Heterodimer of a large membrane-associated beta subunit and a small pyruvoyl-containing alpha subunit. It depends on pyruvate as a cofactor. In terms of processing, is synthesized initially as an inactive proenzyme. Formation of the active enzyme involves a self-maturation process in which the active site pyruvoyl group is generated from an internal serine residue via an autocatalytic post-translational modification. Two non-identical subunits are generated from the proenzyme in this reaction, and the pyruvate is formed at the N-terminus of the alpha chain, which is derived from the carboxyl end of the proenzyme. The post-translation cleavage follows an unusual pathway, termed non-hydrolytic serinolysis, in which the side chain hydroxyl group of the serine supplies its oxygen atom to form the C-terminus of the beta chain, while the remainder of the serine residue undergoes an oxidative deamination to produce ammonia and the pyruvoyl prosthetic group on the alpha chain.

The protein resides in the cell membrane. The catalysed reaction is a 1,2-diacyl-sn-glycero-3-phospho-L-serine + H(+) = a 1,2-diacyl-sn-glycero-3-phosphoethanolamine + CO2. Its pathway is phospholipid metabolism; phosphatidylethanolamine biosynthesis; phosphatidylethanolamine from CDP-diacylglycerol: step 2/2. In terms of biological role, catalyzes the formation of phosphatidylethanolamine (PtdEtn) from phosphatidylserine (PtdSer). The polypeptide is Phosphatidylserine decarboxylase proenzyme (Nitrosomonas europaea (strain ATCC 19718 / CIP 103999 / KCTC 2705 / NBRC 14298)).